Consider the following 229-residue polypeptide: 7-cyano-7-deazaguanine synthase (229 aa).

ATP is bound at residue 15 to 25; it reads LSGGLDSTTCL. The Zn(2+) site is built by C192, C202, C205, and C208.

The protein belongs to the QueC family. It depends on Zn(2+) as a cofactor.

It carries out the reaction 7-carboxy-7-deazaguanine + NH4(+) + ATP = 7-cyano-7-deazaguanine + ADP + phosphate + H2O + H(+). It participates in purine metabolism; 7-cyano-7-deazaguanine biosynthesis. Catalyzes the ATP-dependent conversion of 7-carboxy-7-deazaguanine (CDG) to 7-cyano-7-deazaguanine (preQ(0)). This Acinetobacter baylyi (strain ATCC 33305 / BD413 / ADP1) protein is 7-cyano-7-deazaguanine synthase.